We begin with the raw amino-acid sequence, 186 residues long: NADH-quinone oxidoreductase subunit C (186 aa).

Residues 166–186 (DSLTPWKGVGRPSDPFDGRKE) form a disordered region.

Belongs to the complex I 30 kDa subunit family. In terms of assembly, NDH-1 is composed of 14 different subunits. Subunits NuoB, C, D, E, F, and G constitute the peripheral sector of the complex.

Its subcellular location is the cell inner membrane. It carries out the reaction a quinone + NADH + 5 H(+)(in) = a quinol + NAD(+) + 4 H(+)(out). In terms of biological role, NDH-1 shuttles electrons from NADH, via FMN and iron-sulfur (Fe-S) centers, to quinones in the respiratory chain. The immediate electron acceptor for the enzyme in this species is believed to be ubiquinone. Couples the redox reaction to proton translocation (for every two electrons transferred, four hydrogen ions are translocated across the cytoplasmic membrane), and thus conserves the redox energy in a proton gradient. The protein is NADH-quinone oxidoreductase subunit C of Neorickettsia sennetsu (strain ATCC VR-367 / Miyayama) (Ehrlichia sennetsu).